Reading from the N-terminus, the 309-residue chain is Cutinase (309 aa).

An N-terminal signal peptide occupies residues 1–47 (MSALTSQPTSSGSSEKIPRLRGWRAKAAGVVLAALALTTGVAAPAPA). The active-site Nucleophile is Ser178. Catalysis depends on charge relay system residues Asp224 and His256. Cys289 and Cys305 are disulfide-bonded.

Belongs to the AB hydrolase superfamily.

Its subcellular location is the secreted. It catalyses the reaction a carboxylic ester + H2O = an alcohol + a carboxylate + H(+). The enzyme catalyses a triacylglycerol + H2O = a diacylglycerol + a fatty acid + H(+). The catalysed reaction is 1,2,3-tri-(9Z-octadecenoyl)-glycerol + H2O = di-(9Z)-octadecenoylglycerol + (9Z)-octadecenoate + H(+). It carries out the reaction (6-hydroxyhexanoyl)(n) + H2O = (6-hydroxyhexanoyl)(n-1) + 6-hydroxyhexanoate + H(+). It catalyses the reaction cutin + H2O = cutin monomers.. Its activity is regulated as follows. No effect on activity by SDS or chelating agents ethylenediaminetetraacetic acid (EDTA) or sodium citrate. No effect on activity by metal ions Ag(+), Ba(2+), Ca(2+), Co(2+), Cu(2+), Mn(2+), Ni(2+), Pb(2+) or Zn(2+). Activated by 1 mM digitonin and sodium deoxycholate, and reducing agents 1 mM 1,4-dithiothreitol, beta-mercaptoethanol and ascorbic acid. Activated by benzene, n-hexane, p-xylene and toluene. Activated by Fe(3+). Inhibited slightly by 1 mM of different chain length fatty acids, and only marginally by 6.0 M urea. Inhibited strongly with chemical modification by reagents phenyl methyl sulfonylfluorid (PMSF), 1-ethyl-3-(3-dimethylaminopropyl) carbodiimide (EDAC), diethylpyrocarbonate (DEPC) and N-bromosuccinimide (NBS). Inhibited by pyridine, DMSO, t-butanol and dodecane. Inhibited by Li(+), Hg(2+) and Mg(2+). No inhibition with chemical modification by reagents N-acetylimidazole (NAI), citraconic anhydride (CA), iodoacetate (IA) and phenylglyoxal (PG). Catalyzes the hydrolysis of cutin, a polyester that forms the structure of plant cuticle. Shows esterase activity towards p-nitrophenol-linked aliphatic esters (pNP-aliphatic esters). Has a preference for medium chain length (C-4 to C-12) fatty acid esters. Active with p-nitrophenyl palmitate (p-NPP) as substrate. Hydrolyzes triacylglycerol substrates non-specifically with a preference for long, unsaturated fatty acyl chains with the highest activity for triolein. Substrates with cis-9 unsaturation are preferred over the saturated triacylglycerols. Hydrolyzes a wide range of natural oils, especially olive oil, with relatively high activity. Capable of catalyzing synthesis of the flavor ester isoamyl acetate by esterification of isoamyl alcohol using acetic acid as an acyl donor. Degrades synthetic aliphatic polyesters, namely poly(1,4-butylene succinate) extended with 1,6-diisocyanatohexane (PBSc-D) and poly(epsilon-caprolactone) (PCL) plastics. Does not degrade poly(lactic acid) (PLA) nor aromatic poly(ethylene terephthalate) (PET), the most abundant polyester plastic in the world. The polypeptide is Cutinase (Amycolatopsis mediterranei (strain S699) (Nocardia mediterranei)).